Here is a 246-residue protein sequence, read N- to C-terminus: MyoD family inhibitor (246 aa).

2 disordered regions span residues 1–76 and 91–151; these read MYQV…LDST and GNPL…SKST. A compositionally biased stretch (low complexity) spans 14–26; that stretch reads APYGAPSAAPGPA. Positions 99–246 constitute an MDFI domain; the sequence is LLPNDSGHPS…MECCGLCFSS (148 aa).

The protein belongs to the MDFI family. Interacts (via C-terminus) with AXIN1 and LEF1. Interacts with CCNT2. Interacts (via C-terminus) with Piezo channel composed of PIEZO1 or PIEZO2; the interaction prolongs Piezo channel inactivation.

The protein resides in the nucleus. It localises to the cytoplasm. In terms of biological role, inhibits the transactivation activity of the Myod family of myogenic factors and represses myogenesis. Acts by associating with Myod family members and retaining them in the cytoplasm by masking their nuclear localization signals. Can also interfere with the DNA-binding activity of Myod family members. Plays an important role in trophoblast and chondrogenic differentiation. Regulates the transcriptional activity of TCF7L1/TCF3 by interacting directly with TCF7L1/TCF3 and preventing it from binding DNA. Binds to the axin complex, resulting in an increase in the level of free beta-catenin. Affects axin regulation of the WNT and JNK signaling pathways. Regulates the activity of mechanosensitive Piezo channel. This Homo sapiens (Human) protein is MyoD family inhibitor (MDFI).